The primary structure comprises 154 residues: Myoglobin (154 aa).

Positions 2 to 148 constitute a Globin domain; it reads GLSDQEWQHV…FRNDMASKYK (147 aa). H65 contributes to the nitrite binding site. H65 is a binding site for O2. A heme b-binding site is contributed by H94.

Monomeric.

The protein resides in the cytoplasm. It localises to the sarcoplasm. The catalysed reaction is Fe(III)-heme b-[protein] + nitric oxide + H2O = Fe(II)-heme b-[protein] + nitrite + 2 H(+). It carries out the reaction H2O2 + AH2 = A + 2 H2O. Functionally, monomeric heme protein which primary function is to store oxygen and facilitate its diffusion within muscle tissues. Reversibly binds oxygen through a pentacoordinated heme iron and enables its timely and efficient release as needed during periods of heightened demand. Depending on the oxidative conditions of tissues and cells, and in addition to its ability to bind oxygen, it also has a nitrite reductase activity whereby it regulates the production of bioactive nitric oxide. Under stress conditions, like hypoxia and anoxia, it also protects cells against reactive oxygen species thanks to its pseudoperoxidase activity. This is Myoglobin from Dromaius novaehollandiae (Emu).